Reading from the N-terminus, the 336-residue chain is Anthranilate phosphoribosyltransferase (336 aa).

Residues G79, 82–83 (GD), T87, 89–92 (NISS), 107–115 (KHGNRSVSS), and S119 contribute to the 5-phospho-alpha-D-ribose 1-diphosphate site. Residue G79 participates in anthranilate binding. S91 contributes to the Mg(2+) binding site. N110 contacts anthranilate. An anthranilate-binding site is contributed by R165. 2 residues coordinate Mg(2+): D223 and E224.

It belongs to the anthranilate phosphoribosyltransferase family. As to quaternary structure, homodimer. Mg(2+) is required as a cofactor.

The catalysed reaction is N-(5-phospho-beta-D-ribosyl)anthranilate + diphosphate = 5-phospho-alpha-D-ribose 1-diphosphate + anthranilate. Its pathway is amino-acid biosynthesis; L-tryptophan biosynthesis; L-tryptophan from chorismate: step 2/5. Functionally, catalyzes the transfer of the phosphoribosyl group of 5-phosphorylribose-1-pyrophosphate (PRPP) to anthranilate to yield N-(5'-phosphoribosyl)-anthranilate (PRA). The protein is Anthranilate phosphoribosyltransferase of Tolumonas auensis (strain DSM 9187 / NBRC 110442 / TA 4).